Consider the following 301-residue polypeptide: Ribosomal RNA small subunit methyltransferase H (301 aa).

S-adenosyl-L-methionine is bound by residues 31 to 33 (GGY), Asp-49, Phe-76, Asp-97, and Gln-104.

It belongs to the methyltransferase superfamily. RsmH family.

It is found in the cytoplasm. It catalyses the reaction cytidine(1402) in 16S rRNA + S-adenosyl-L-methionine = N(4)-methylcytidine(1402) in 16S rRNA + S-adenosyl-L-homocysteine + H(+). In terms of biological role, specifically methylates the N4 position of cytidine in position 1402 (C1402) of 16S rRNA. This chain is Ribosomal RNA small subunit methyltransferase H, found in Ehrlichia ruminantium (strain Gardel).